Reading from the N-terminus, the 82-residue chain is ASGEELFKSKPCGACHSVQAKLVGPALKDVAAKNAGVDGAADVLAGHIKNGSTGVWGAMPMPPNPVTEEEAKTLAEWVLTLK.

Residues Cys12, Cys15, His16, and Met61 each contribute to the heme c site.

In terms of processing, binds 1 heme c group covalently per subunit.

This is a prokaryotic monoheme cytochrome, unreactive with mitochondrial cytochrome C oxidase or reductase. It functions in nitrite and nitrate respiration in Pseudomonas, but it is also found in other bacteria. The sequence is that of Cytochrome c-551 from Ectopseudomonas mendocina (Pseudomonas mendocina).